A 152-amino-acid chain; its full sequence is uncharacterized protein (152 aa).

Positions 1–23 (MYSILIACLVLLLCLVIYVGHRA) are cleaved as a signal peptide.

This sequence belongs to the asfivirus EP152R family.

It localises to the virion. This is an uncharacterized protein from Ornithodoros (relapsing fever ticks).